A 202-amino-acid chain; its full sequence is MSRYRGPRVRIIRRLGALPGLTNKTPQLKSSSINQSASNKKISQYRIRLEEKQKLRFHYGITERQLLNYVRIARKAKGSTGEILLQLLEMRLDNVIFRLGMTPTIPGARQLVNHRHILVNGYIVDIPSYRCKPQDFINIKNQRKSEAIISKNIEFYQKYKIPNHLTYNSLEKKGLVNQILNRESIGLKINELLVVEYYSRQA.

In terms of domain architecture, S4 RNA-binding spans 90 to 153 (MRLDNVIFRL…KSEAIISKNI (64 aa)).

Belongs to the universal ribosomal protein uS4 family. As to quaternary structure, part of the 30S ribosomal subunit. Contacts protein S5. The interaction surface between S4 and S5 is involved in control of translational fidelity.

It localises to the plastid. The protein localises to the chloroplast. Functionally, one of the primary rRNA binding proteins, it binds directly to 16S rRNA where it nucleates assembly of the body of the 30S subunit. In terms of biological role, with S5 and S12 plays an important role in translational accuracy. In Hypopterygium didictyon, this protein is Small ribosomal subunit protein uS4c (rps4).